A 429-amino-acid chain; its full sequence is Histidine--tRNA ligase (429 aa).

This sequence belongs to the class-II aminoacyl-tRNA synthetase family. In terms of assembly, homodimer.

The protein localises to the cytoplasm. It catalyses the reaction tRNA(His) + L-histidine + ATP = L-histidyl-tRNA(His) + AMP + diphosphate + H(+). The chain is Histidine--tRNA ligase from Streptococcus pneumoniae (strain CGSP14).